The primary structure comprises 218 residues: uncharacterized protein (218 aa).

The signal sequence occupies residues 1-17; it reads MLKKIIILFLGIFLLSS. A lipid anchor (N-palmitoyl cysteine) is attached at Cys18. Cys18 is lipidated: S-diacylglycerol cysteine. A coiled-coil region spans residues 136–164; the sequence is YKEKKIEEELNQIKAMLKETKRDITKYTC.

It is found in the cell membrane. This is an uncharacterized protein from Rickettsia typhi (strain ATCC VR-144 / Wilmington).